The chain runs to 137 residues: Cofilin-1A (137 aa).

The ADF-H domain occupies S2–T135.

Belongs to the actin-binding proteins ADF family.

It localises to the nucleus matrix. It is found in the cytoplasm. The protein localises to the cytoskeleton. Functionally, controls reversibly actin polymerization and depolymerization in a pH-sensitive manner. It has the ability to bind G- and F-actin in a 1:1 ratio of cofilin to actin. It is the major component of intranuclear and cytoplasmic actin rods. The protein is Cofilin-1A (cofA) of Dictyostelium discoideum (Social amoeba).